Reading from the N-terminus, the 67-residue chain is Large ribosomal subunit protein uL29 (67 aa).

This sequence belongs to the universal ribosomal protein uL29 family.

This chain is Large ribosomal subunit protein uL29, found in Ehrlichia canis (strain Jake).